Here is a 568-residue protein sequence, read N- to C-terminus: Involucrin (568 aa).

2 disordered regions span residues 23 to 499 (CSPA…EKEL) and 517 to 568 (RKKH…HEVQ). A compositionally biased stretch (low complexity) spans 25–36 (PAQTQQEQTKQP). Positions 49–77 (TQEKGFPKHEEKEANPVKDLPEQESEHHQ) are enriched in basic and acidic residues. Over residues 78-88 (QPGPQKQQLQV) the composition is skewed to low complexity. The span at 89–106 (KKPEQELQEQELHSEKQP) shows a compositional bias: basic and acidic residues. Composition is skewed to low complexity over residues 107-121 (QEPQ…QQQR), 133-154 (HQQP…QDVL), and 172-181 (PELPLGQQQK). Basic and acidic residues predominate over residues 193–213 (KQQKLHLVERHQEPQEQELHH). The segment covering 217-232 (QKQQQPQEQELQLVQH) has biased composition (low complexity). Basic and acidic residues-rich tracts occupy residues 266 to 333 (ESHE…HQET) and 345 to 456 (KPHE…HLGK). Positions 457–467 (QQEQQIEYEGY) are enriched in low complexity. The residue at position 472 (S472) is a Phosphoserine. Composition is skewed to basic and acidic residues over residues 478–499 (KQEK…EKEL), 517–532 (RKKH…EKQI), and 551–568 (VKED…HEVQ).

It belongs to the involucrin family. Directly or indirectly cross-linked to cornifelin (CNFN). In terms of processing, substrate of transglutaminase. Specific glutamines or lysines are cross-linked to keratins, desmoplakin and to inter involucrin molecules. As to expression, keratinocytes of epidermis and other stratified squamous epithelia.

Its subcellular location is the cytoplasm. Part of the insoluble cornified cell envelope (CE) of stratified squamous epithelia. The protein is Involucrin (Ivl) of Rattus norvegicus (Rat).